Here is a 205-residue protein sequence, read N- to C-terminus: Thymidylate kinase (205 aa).

11–18 contributes to the ATP binding site; sequence GVEGSGKS.

This sequence belongs to the thymidylate kinase family.

It catalyses the reaction dTMP + ATP = dTDP + ADP. In terms of biological role, phosphorylation of dTMP to form dTDP in both de novo and salvage pathways of dTTP synthesis. The polypeptide is Thymidylate kinase (Ruthia magnifica subsp. Calyptogena magnifica).